We begin with the raw amino-acid sequence, 341 residues long: tRNA N6-adenosine threonylcarbamoyltransferase (341 aa).

2 residues coordinate Fe cation: H111 and H115. Residues L134 to G138, D167, G180, and N270 contribute to the substrate site. D298 contributes to the Fe cation binding site.

It belongs to the KAE1 / TsaD family. Requires Fe(2+) as cofactor.

Its subcellular location is the cytoplasm. It carries out the reaction L-threonylcarbamoyladenylate + adenosine(37) in tRNA = N(6)-L-threonylcarbamoyladenosine(37) in tRNA + AMP + H(+). Required for the formation of a threonylcarbamoyl group on adenosine at position 37 (t(6)A37) in tRNAs that read codons beginning with adenine. Is involved in the transfer of the threonylcarbamoyl moiety of threonylcarbamoyl-AMP (TC-AMP) to the N6 group of A37, together with TsaE and TsaB. TsaD likely plays a direct catalytic role in this reaction. The polypeptide is tRNA N6-adenosine threonylcarbamoyltransferase (Thiobacillus denitrificans (strain ATCC 25259 / T1)).